The following is a 220-amino-acid chain: Ribose-5-phosphate isomerase A (220 aa).

Substrate-binding positions include 25 to 28 (TGST), 80 to 83 (DGAD), and 93 to 96 (KGGG). Glu102 acts as the Proton acceptor in catalysis. Lys120 provides a ligand contact to substrate.

It belongs to the ribose 5-phosphate isomerase family. As to quaternary structure, homodimer.

It carries out the reaction aldehydo-D-ribose 5-phosphate = D-ribulose 5-phosphate. The protein operates within carbohydrate degradation; pentose phosphate pathway; D-ribose 5-phosphate from D-ribulose 5-phosphate (non-oxidative stage): step 1/1. Its function is as follows. Catalyzes the reversible conversion of ribose-5-phosphate to ribulose 5-phosphate. This is Ribose-5-phosphate isomerase A from Bacillus thuringiensis subsp. konkukian (strain 97-27).